Here is a 445-residue protein sequence, read N- to C-terminus: Xylose isomerase (445 aa).

Catalysis depends on residues His107 and Asp110. Residues Glu238, Glu274, His277, Asp302, Asp313, Asp315, and Asp345 each contribute to the Mg(2+) site.

This sequence belongs to the xylose isomerase family. In terms of assembly, homotetramer. Mg(2+) is required as a cofactor.

Its subcellular location is the cytoplasm. The enzyme catalyses alpha-D-xylose = alpha-D-xylulofuranose. This chain is Xylose isomerase, found in Bacillus velezensis (strain DSM 23117 / BGSC 10A6 / LMG 26770 / FZB42) (Bacillus amyloliquefaciens subsp. plantarum).